The chain runs to 127 residues: Aspartate 1-decarboxylase (127 aa).

Catalysis depends on S25, which acts as the Schiff-base intermediate with substrate; via pyruvic acid. S25 carries the pyruvic acid (Ser) modification. T57 provides a ligand contact to substrate. The active-site Proton donor is Y58. Residue 73–75 (GAA) participates in substrate binding.

This sequence belongs to the PanD family. In terms of assembly, heterooctamer of four alpha and four beta subunits. The cofactor is pyruvate. Post-translationally, is synthesized initially as an inactive proenzyme, which is activated by self-cleavage at a specific serine bond to produce a beta-subunit with a hydroxyl group at its C-terminus and an alpha-subunit with a pyruvoyl group at its N-terminus.

The protein localises to the cytoplasm. It carries out the reaction L-aspartate + H(+) = beta-alanine + CO2. It functions in the pathway cofactor biosynthesis; (R)-pantothenate biosynthesis; beta-alanine from L-aspartate: step 1/1. Catalyzes the pyruvoyl-dependent decarboxylation of aspartate to produce beta-alanine. In Staphylococcus carnosus (strain TM300), this protein is Aspartate 1-decarboxylase.